The sequence spans 519 residues: Serine/threonine-protein kinase RIO3 (519 aa).

S8, S112, S125, S127, and S128 each carry phosphoserine. The segment at 122 to 159 (FEDSDSSEDEVDWQDTRDDPYRPAKPIPTPKKGFIGKG) is disordered. The segment covering 124-134 (DSDSSEDEVDW) has biased composition (acidic residues). A Protein kinase domain is found at 251 to 519 (ETITGCISTG…DGSPPVLSAD (269 aa)). ATP-binding positions include 257-265 (ISTGKESVV) and K290. D406 (proton acceptor) is an active-site residue. S512 bears the Phosphoserine mark.

It belongs to the protein kinase superfamily. RIO-type Ser/Thr kinase family. Interacts with CASP10. Interacts with IRF3; RIOK3 probably mediates the interaction of TBK1 with IRF3. Associated with 40S pre-ribosomal particles. The cofactor is Mg(2+). Post-translationally, autophosphorylated (in vitro).

Its subcellular location is the cytoplasm. The enzyme catalyses L-seryl-[protein] + ATP = O-phospho-L-seryl-[protein] + ADP + H(+). The catalysed reaction is L-threonyl-[protein] + ATP = O-phospho-L-threonyl-[protein] + ADP + H(+). In terms of biological role, involved in regulation of type I interferon (IFN)-dependent immune response which plays a critical role in the innate immune response against DNA and RNA viruses. May act as an adapter protein essential for the recruitment of TBK1 to IRF3. Phosphorylates IFIH1 on 'Ser-828' interfering with IFIH1 filament assembly on long dsRNA and resulting in attenuated IFIH1-signaling. Can inhibit CASP10 isoform 7-mediated activation of the NF-kappaB signaling pathway. May play a role in the biogenesis of the 40S ribosomal subunit. Involved in the processing of 21S pre-rRNA to the mature 18S rRNA. This is Serine/threonine-protein kinase RIO3 (Riok3) from Mus musculus (Mouse).